Reading from the N-terminus, the 180-residue chain is 3-hydroxyanthranilate 3,4-dioxygenase (180 aa).

Arginine 46 is an O2 binding site. Fe cation contacts are provided by histidine 50, glutamate 56, and histidine 94. Glutamate 56 serves as a coordination point for substrate. The substrate site is built by arginine 98 and glutamate 109. Cysteine 124, cysteine 127, cysteine 161, and cysteine 164 together coordinate Fe cation.

The protein belongs to the 3-HAO family. As to quaternary structure, homodimer. Fe(2+) is required as a cofactor.

It catalyses the reaction 3-hydroxyanthranilate + O2 = (2Z,4Z)-2-amino-3-carboxymuconate 6-semialdehyde. It participates in cofactor biosynthesis; NAD(+) biosynthesis; quinolinate from L-kynurenine: step 3/3. Its function is as follows. Catalyzes the oxidative ring opening of 3-hydroxyanthranilate to 2-amino-3-carboxymuconate semialdehyde, which spontaneously cyclizes to quinolinate. In Jannaschia sp. (strain CCS1), this protein is 3-hydroxyanthranilate 3,4-dioxygenase.